Consider the following 166-residue polypeptide: Large ribosomal subunit protein uL11 (166 aa).

The protein belongs to the universal ribosomal protein uL11 family. As to quaternary structure, part of the ribosomal stalk of the 50S ribosomal subunit. Interacts with L10 and the large rRNA to form the base of the stalk. L10 forms an elongated spine to which L12 dimers bind in a sequential fashion forming a multimeric L10(L12)X complex.

In terms of biological role, forms part of the ribosomal stalk which helps the ribosome interact with GTP-bound translation factors. This chain is Large ribosomal subunit protein uL11, found in Methanopyrus kandleri (strain AV19 / DSM 6324 / JCM 9639 / NBRC 100938).